We begin with the raw amino-acid sequence, 559 residues long: DNA primase (559 aa).

A CHC2-type zinc finger spans residues 37 to 61; sequence CPFHEERSASFSVNQIKGFYHCFGC. One can recognise a Toprim domain in the interval 246–327; sequence KQVIVTEGYL…RGGVILFENN (82 aa). Mg(2+)-binding residues include Glu-252, Asp-296, and Asp-298.

The protein belongs to the DnaG primase family. Monomer. The C-terminal domain DnaB-binding domain exists as a dimer in solution. Interacts with DnaB via its C-terminal domain (residues 415-559 of DnaG); up to 3 DnaG fragments bind to a DnaB hexamer. Zn(2+) serves as cofactor. It depends on Mg(2+) as a cofactor.

The catalysed reaction is ssDNA + n NTP = ssDNA/pppN(pN)n-1 hybrid + (n-1) diphosphate.. Its function is as follows. RNA polymerase that catalyzes the synthesis of short RNA molecules used as primers for DNA polymerase during DNA replication. Stimulates the 5'-3' DNA helicase activity of DnaB. This chain is DNA primase, found in Helicobacter pylori (strain ATCC 700392 / 26695) (Campylobacter pylori).